The sequence spans 127 residues: Protein ApaG (127 aa).

Residues 3–127 (DQPPTEIQIS…FRLAAATVFH (125 aa)) form the ApaG domain.

The polypeptide is Protein ApaG (Acidithiobacillus ferrooxidans (strain ATCC 23270 / DSM 14882 / CIP 104768 / NCIMB 8455) (Ferrobacillus ferrooxidans (strain ATCC 23270))).